The sequence spans 144 residues: Large ribosomal subunit protein uL16 (144 aa).

Belongs to the universal ribosomal protein uL16 family. Part of the 50S ribosomal subunit.

Functionally, binds 23S rRNA and is also seen to make contacts with the A and possibly P site tRNAs. The protein is Large ribosomal subunit protein uL16 of Enterococcus faecalis (strain ATCC 700802 / V583).